The sequence spans 431 residues: L-ornithine N(5)-monooxygenase (431 aa).

FAD is bound by residues Glu-40 to His-48 and Gln-59. Lys-64 lines the substrate pocket. NADP(+) is bound by residues Cys-202–Ser-205 and Arg-228. Substrate contacts are provided by residues Asn-242–Tyr-245 and Asn-273. Residue Asn-273–Ser-275 participates in NADP(+) binding. Residue Thr-399 to Leu-401 participates in FAD binding. Ser-402 lines the substrate pocket.

The protein belongs to the lysine N(6)-hydroxylase/L-ornithine N(5)-oxygenase family. FAD serves as cofactor.

The protein resides in the cytoplasm. It localises to the nucleus. The enzyme catalyses L-ornithine + NADPH + O2 = N(5)-hydroxy-L-ornithine + NADP(+) + H2O. The catalysed reaction is L-ornithine + NADH + O2 = N(5)-hydroxy-L-ornithine + NAD(+) + H2O. It participates in siderophore biosynthesis; ferrichrome biosynthesis. Catalyzes the conversion of L-ornithine to N(5)-hydroxyornithine, the first step in the biosynthesis of all hydroxamate-containing siderophores, such as ferrichrome. The sequence is that of L-ornithine N(5)-monooxygenase from Schizosaccharomyces pombe (strain 972 / ATCC 24843) (Fission yeast).